The chain runs to 513 residues: ATP synthase subunit alpha (513 aa).

169-176 (GDRQTGKT) provides a ligand contact to ATP.

Belongs to the ATPase alpha/beta chains family. As to quaternary structure, F-type ATPases have 2 components, CF(1) - the catalytic core - and CF(0) - the membrane proton channel. CF(1) has five subunits: alpha(3), beta(3), gamma(1), delta(1), epsilon(1). CF(0) has three main subunits: a(1), b(2) and c(9-12). The alpha and beta chains form an alternating ring which encloses part of the gamma chain. CF(1) is attached to CF(0) by a central stalk formed by the gamma and epsilon chains, while a peripheral stalk is formed by the delta and b chains.

The protein resides in the cell inner membrane. The catalysed reaction is ATP + H2O + 4 H(+)(in) = ADP + phosphate + 5 H(+)(out). Its function is as follows. Produces ATP from ADP in the presence of a proton gradient across the membrane. The alpha chain is a regulatory subunit. The protein is ATP synthase subunit alpha of Salmonella paratyphi C (strain RKS4594).